The chain runs to 431 residues: Enolase (431 aa).

Position 167 (Gln-167) interacts with (2R)-2-phosphoglycerate. The active-site Proton donor is Glu-209. Mg(2+) is bound by residues Asp-246, Glu-289, and Asp-316. Residues Lys-341, Arg-370, Ser-371, and Lys-392 each coordinate (2R)-2-phosphoglycerate. Residue Lys-341 is the Proton acceptor of the active site.

Belongs to the enolase family. Component of the RNA degradosome, a multiprotein complex involved in RNA processing and mRNA degradation. Mg(2+) serves as cofactor.

It localises to the cytoplasm. The protein localises to the secreted. It is found in the cell surface. It catalyses the reaction (2R)-2-phosphoglycerate = phosphoenolpyruvate + H2O. Its pathway is carbohydrate degradation; glycolysis; pyruvate from D-glyceraldehyde 3-phosphate: step 4/5. Catalyzes the reversible conversion of 2-phosphoglycerate (2-PG) into phosphoenolpyruvate (PEP). It is essential for the degradation of carbohydrates via glycolysis. The sequence is that of Enolase from Shewanella pealeana (strain ATCC 700345 / ANG-SQ1).